A 210-amino-acid polypeptide reads, in one-letter code: Pyridoxine/pyridoxamine 5'-phosphate oxidase (210 aa).

Substrate contacts are provided by residues 7-10 and K65; that span reads REDY. FMN-binding positions include 60–65, 75–76, R81, K82, and Q104; these read RMVLLK and FT. Residues Y122, R126, and S130 each coordinate substrate. FMN is bound by residues 139–140 and W183; that span reads QS. Substrate is bound at residue 189-191; that stretch reads RLH. R193 is a binding site for FMN.

Belongs to the pyridoxamine 5'-phosphate oxidase family. As to quaternary structure, homodimer. It depends on FMN as a cofactor.

The enzyme catalyses pyridoxamine 5'-phosphate + O2 + H2O = pyridoxal 5'-phosphate + H2O2 + NH4(+). It carries out the reaction pyridoxine 5'-phosphate + O2 = pyridoxal 5'-phosphate + H2O2. It participates in cofactor metabolism; pyridoxal 5'-phosphate salvage; pyridoxal 5'-phosphate from pyridoxamine 5'-phosphate: step 1/1. Its pathway is cofactor metabolism; pyridoxal 5'-phosphate salvage; pyridoxal 5'-phosphate from pyridoxine 5'-phosphate: step 1/1. Functionally, catalyzes the oxidation of either pyridoxine 5'-phosphate (PNP) or pyridoxamine 5'-phosphate (PMP) into pyridoxal 5'-phosphate (PLP). The polypeptide is Pyridoxine/pyridoxamine 5'-phosphate oxidase (Neisseria gonorrhoeae (strain ATCC 700825 / FA 1090)).